A 95-amino-acid chain; its full sequence is Large ribosomal subunit protein uL23 (95 aa).

Belongs to the universal ribosomal protein uL23 family. In terms of assembly, part of the 50S ribosomal subunit. Contacts protein L29, and trigger factor when it is bound to the ribosome.

In terms of biological role, one of the early assembly proteins it binds 23S rRNA. One of the proteins that surrounds the polypeptide exit tunnel on the outside of the ribosome. Forms the main docking site for trigger factor binding to the ribosome. This chain is Large ribosomal subunit protein uL23, found in Desulforapulum autotrophicum (strain ATCC 43914 / DSM 3382 / VKM B-1955 / HRM2) (Desulfobacterium autotrophicum).